Reading from the N-terminus, the 328-residue chain is D-cysteine desulfhydrase (328 aa).

Lysine 51 bears the N6-(pyridoxal phosphate)lysine mark.

The protein belongs to the ACC deaminase/D-cysteine desulfhydrase family. Homodimer. Requires pyridoxal 5'-phosphate as cofactor.

It carries out the reaction D-cysteine + H2O = hydrogen sulfide + pyruvate + NH4(+) + H(+). Functionally, catalyzes the alpha,beta-elimination reaction of D-cysteine and of several D-cysteine derivatives. It could be a defense mechanism against D-cysteine. The polypeptide is D-cysteine desulfhydrase (Salmonella choleraesuis (strain SC-B67)).